A 180-amino-acid chain; its full sequence is MIVYLHGFDSNSPGNHEKVLQLQFIDPDVRFISYSTLHPRHDMQHLLKEVDKAIQQGGDAKSLICGVGLGGFWAERIGFLCGIRQVAFNPNLYPQDNMSGKIDRPEEYVDIASKCISDFREKNRDRCLVVLSRNDEMLDSKRTAGDLHPYYEIVWDEKQGHKFKDLSPHLQRIKAFKTLG.

It belongs to the UPF0227 family.

The protein is UPF0227 protein YE1706 of Yersinia enterocolitica serotype O:8 / biotype 1B (strain NCTC 13174 / 8081).